Reading from the N-terminus, the 264-residue chain is General transcription factor IIF subunit 2 (264 aa).

It belongs to the TFIIF beta subunit family. In terms of assembly, heterodimer of an alpha and a beta subunit.

The protein localises to the nucleus. In terms of biological role, TFIIF is a general transcription initiation factor that binds to RNA polymerase II and helps to recruit it to the initiation complex in collaboration with TFIIB. This Xenopus laevis (African clawed frog) protein is General transcription factor IIF subunit 2 (gtf2f2).